We begin with the raw amino-acid sequence, 229 residues long: Vacuolar protein-sorting-associated protein 60 (229 aa).

Residues 9–155 (NKKSHDQLLQ…QGDELQEVLA (147 aa)) are a coiled coil. The residue at position 12 (serine 12) is a Phosphoserine. An interaction with VTA1 region spans residues 128–159 (INIDKLQDMQDEMLDLIEQGDELQEVLAMNNN). A disordered region spans residues 186–229 (PTSENSLGNDMPSYLLGANAPPAFIDEEPNLDTEDKNKALESAQ). Positions 218–229 (TEDKNKALESAQ) are enriched in basic and acidic residues.

The protein belongs to the SNF7 family. In terms of assembly, interacts with VTA1; the interaction occurs at he endosomal membrane.

The protein localises to the endosome membrane. It localises to the vacuole membrane. Its function is as follows. Has a role in a late stage of multivesicular body (MVB) formation. Can stimulate VPS4 ATPase activity via VTA1. The protein is Vacuolar protein-sorting-associated protein 60 (VPS60) of Saccharomyces cerevisiae (strain ATCC 204508 / S288c) (Baker's yeast).